The following is a 343-amino-acid chain: MGEYIMEKNTIILGIETSCDETAVAVVKNGTEIIANVVASQIESHKRFGGVVPEIASRHHVEEITVVLEEALKEANITFDDIDAIAVTEGPGLVGALLIGVNAAKAVAFAHDIPLVGVHHIAGHIYANRLVKEVQFPLLSLVVSGGHTELVYMKEHGSFEVIGETRDDAAGEAYDKVARTLSMPYPGGPHIDRLAHEGKPTIDLPRAWLEPDSYDFSFSGLKSAVINTVHNAKQRGIEIAPEDLAASFQESVIDVLVTKASRAADAYNVKQVLLAGGVAANKGLRARLEAEFAQKENVELIIPPLSLCTDNAAMIAAAGTIAYEQGKRATLALNANPGLDIES.

The Fe cation site is built by H120 and H124. Residues 142–146 (VVSGG), D175, G188, D192, and N281 contribute to the substrate site. D310 serves as a coordination point for Fe cation.

It belongs to the KAE1 / TsaD family. Fe(2+) is required as a cofactor.

It is found in the cytoplasm. It catalyses the reaction L-threonylcarbamoyladenylate + adenosine(37) in tRNA = N(6)-L-threonylcarbamoyladenosine(37) in tRNA + AMP + H(+). Functionally, required for the formation of a threonylcarbamoyl group on adenosine at position 37 (t(6)A37) in tRNAs that read codons beginning with adenine. Is involved in the transfer of the threonylcarbamoyl moiety of threonylcarbamoyl-AMP (TC-AMP) to the N6 group of A37, together with TsaE and TsaB. TsaD likely plays a direct catalytic role in this reaction. The protein is tRNA N6-adenosine threonylcarbamoyltransferase of Bacillus thuringiensis subsp. konkukian (strain 97-27).